The sequence spans 93 residues: HssA/B-like protein 23 (93 aa).

Belongs to the hssA/B family.

The polypeptide is HssA/B-like protein 23 (hssl23) (Dictyostelium discoideum (Social amoeba)).